The chain runs to 461 residues: Argininosuccinate lyase (461 aa).

The protein belongs to the lyase 1 family. Argininosuccinate lyase subfamily.

The protein localises to the cytoplasm. The catalysed reaction is 2-(N(omega)-L-arginino)succinate = fumarate + L-arginine. Its pathway is amino-acid biosynthesis; L-arginine biosynthesis; L-arginine from L-ornithine and carbamoyl phosphate: step 3/3. In Chloroflexus aurantiacus (strain ATCC 29366 / DSM 635 / J-10-fl), this protein is Argininosuccinate lyase.